Reading from the N-terminus, the 532-residue chain is Nitrogenase molybdenum-iron protein alpha chain (532 aa).

[8Fe-7S] cluster contacts are provided by Cys-62, Cys-88, and Cys-153. The [7Fe-Mo-9S-C-homocitryl] cluster site is built by Cys-271 and His-489.

It belongs to the NifD/NifK/NifE/NifN family. Tetramer of two alpha and two beta chains. Forms complex with the iron protein (nitrogenase component 2). It depends on [8Fe-7S] cluster as a cofactor. Requires [7Fe-Mo-9S-C-homocitryl] cluster as cofactor.

It catalyses the reaction N2 + 8 reduced [2Fe-2S]-[ferredoxin] + 16 ATP + 16 H2O = H2 + 8 oxidized [2Fe-2S]-[ferredoxin] + 2 NH4(+) + 16 ADP + 16 phosphate + 6 H(+). Its function is as follows. This molybdenum-iron protein is part of the nitrogenase complex that catalyzes the key enzymatic reactions in nitrogen fixation. In Methanosarcina barkeri, this protein is Nitrogenase molybdenum-iron protein alpha chain (nifD2).